The following is a 204-amino-acid chain: Inner membrane-spanning protein YciB (204 aa).

6 consecutive transmembrane segments (helical) span residues 3–23 (AEIS…VFFF), 45–65 (IFIA…VSWI), 70–90 (LPIM…LTLW), 107–127 (LFGV…GYVF), 145–165 (WGVF…MFTT), and 168–188 (WVAF…MAQM).

It belongs to the YciB family.

It localises to the cell inner membrane. Its function is as follows. Plays a role in cell envelope biogenesis, maintenance of cell envelope integrity and membrane homeostasis. The polypeptide is Inner membrane-spanning protein YciB (Agrobacterium fabrum (strain C58 / ATCC 33970) (Agrobacterium tumefaciens (strain C58))).